Here is a 208-residue protein sequence, read N- to C-terminus: Uracil phosphoribosyltransferase (208 aa).

5-phospho-alpha-D-ribose 1-diphosphate is bound by residues Arg-78, Arg-103, and 130–138; that span reads DPMLATANS. Uracil is bound by residues Ile-193 and 198–200; that span reads GDA. Asp-199 contributes to the 5-phospho-alpha-D-ribose 1-diphosphate binding site.

It belongs to the UPRTase family. It depends on Mg(2+) as a cofactor.

The enzyme catalyses UMP + diphosphate = 5-phospho-alpha-D-ribose 1-diphosphate + uracil. It participates in pyrimidine metabolism; UMP biosynthesis via salvage pathway; UMP from uracil: step 1/1. With respect to regulation, allosterically activated by GTP. Its function is as follows. Catalyzes the conversion of uracil and 5-phospho-alpha-D-ribose 1-diphosphate (PRPP) to UMP and diphosphate. This chain is Uracil phosphoribosyltransferase, found in Brucella canis (strain ATCC 23365 / NCTC 10854 / RM-666).